Consider the following 420-residue polypeptide: MEFPKPRQFRETSLLMYYLDVVFPLQYISPNNNCLGKREWLLTILTSARPTYYATLCLALLYKESLSTSCRSEQTLVWKREKTYYYILALQESQKLLGGLNKTFGITRLKGTVVALACMLQLIGFESSHLSRGDWRVHLLAANTLIPVLAEGWSTALQSGPPATSIWCELDESDFDSIDDQTSLSFEYLGALRFLSNSLAKIGILSCISVGPAAPFEDYGHLLDQPGLIQLEEVLGCKNWAMLTILEVGKLDRWKRQEQEHNRLSLKTLAMRAMIIEDMLTDELQKLPTSETLPDLITHIYAASIATYLHTVVSGLNPNLSEVQDSVCATILLLERLPDLQAVASVTWPLAVTGCMASESHKDFFRSTLRSYEATFSSLKKYDGVLEVLEDAWKKREVDTESPMRWEDLMDHHGLPVLLF.

Belongs to the TRI10 transcription regulator family.

Its subcellular location is the nucleus. Its function is as follows. Transcriptional activator of all of the trichothecene biosynthesis genes. Acts upstream of the cluster-encoded transcription factor TRI6 and is necessary for full expression of both the other trichothecene genes and the genes for the primary metabolic pathway that precedes the trichothecene biosynthetic pathway. This is Trichothecene biosynthesis transcription regulator TRI10 from Fusarium sporotrichioides.